A 132-amino-acid chain; its full sequence is MSVNDPLGDMLTRIRNAQLRGKSTVSTPASRLRAWVLDVLQAEGYIRGYEKKETENGQGELVISLKYFEGTPVIRELKRVSKPGRRVYMATKDLPSVRNGLGVSIISTPKGVMSDASARSANVGGEVLCTVF.

It belongs to the universal ribosomal protein uS8 family. As to quaternary structure, part of the 30S ribosomal subunit. Contacts proteins S5 and S12.

One of the primary rRNA binding proteins, it binds directly to 16S rRNA central domain where it helps coordinate assembly of the platform of the 30S subunit. This is Small ribosomal subunit protein uS8 from Cereibacter sphaeroides (strain ATCC 17029 / ATH 2.4.9) (Rhodobacter sphaeroides).